The chain runs to 421 residues: Aspartokinase (421 aa).

Residue 7–10 (KYGG) participates in ATP binding. 25–30 (RIVATK) serves as a coordination point for substrate. Ser-41 is a binding site for ATP. Residues 45–49 (DTTDE), Glu-74, 125–126 (LD), 151–154 (RGGS), and Ser-154 each bind substrate. ATP-binding positions include 174-175 (SD), 180-185 (YTADPR), and Lys-210. 2 ACT domains span residues 267-343 (VTVL…YDDQ) and 349-421 (LVGA…GTGR). Substrate contacts are provided by residues Asp-274, 274–279 (DKPGEA), 292–294 (NID), Gln-298, 360–361 (VT), 374–375 (NV), and 381–382 (SE).

Belongs to the aspartokinase family. In terms of assembly, tetramer consisting of 2 isoforms Alpha (catalytic and regulation) and of a homodimer of 2 isoforms Beta (regulation).

The catalysed reaction is L-aspartate + ATP = 4-phospho-L-aspartate + ADP. Its pathway is amino-acid biosynthesis; L-lysine biosynthesis via DAP pathway; (S)-tetrahydrodipicolinate from L-aspartate: step 1/4. It participates in amino-acid biosynthesis; L-methionine biosynthesis via de novo pathway; L-homoserine from L-aspartate: step 1/3. It functions in the pathway amino-acid biosynthesis; L-threonine biosynthesis; L-threonine from L-aspartate: step 1/5. Its function is as follows. Catalyzes the phosphorylation of the beta-carboxyl group of aspartic acid with ATP to yield 4-phospho-L-aspartate, which is involved in the branched biosynthetic pathway leading to the biosynthesis of amino acids lysine, threonine, isoleucine and methionine. The sequence is that of Aspartokinase (lysC) from Corynebacterium efficiens (strain DSM 44549 / YS-314 / AJ 12310 / JCM 11189 / NBRC 100395).